A 162-amino-acid polypeptide reads, in one-letter code: EF-hand calcium-binding domain-containing protein 11 (162 aa).

EF-hand domains follow at residues 18-53 (SERRKWVEVFKACDEDNKGYLSREDFKVAIVMLFGY), 91-126 (LYRNEIRHIFTAFDVHYRGFLTLEDFKRAFSQVAPK), and 127-162 (LPSRTVLEVFREADQDSDGHVSFRDFEYAMNHGKAK). Ca(2+) contacts are provided by D140, D142, D144, H146, and D151.

The polypeptide is EF-hand calcium-binding domain-containing protein 11 (Efcab11) (Rattus norvegicus (Rat)).